The following is a 206-amino-acid chain: Amelogenin, Y isoform (206 aa).

An N-terminal signal peptide occupies residues 1–16; that stretch reads MGTWILFACLVGAAFA. The interval 118–180 is disordered; sequence VPGQQSMTPT…PPLPPMFPLR (63 aa). The span at 128-142 shows a compositional bias: low complexity; it reads QHHQPNLPLPAQQPF. A compositionally biased stretch (pro residues) spans 143–180; the sequence is QPQPVQPQPHQPMQPQPPVQPMQPLLPQPPLPPMFPLR.

The protein belongs to the amelogenin family.

The protein localises to the secreted. Its subcellular location is the extracellular space. The protein resides in the extracellular matrix. In terms of biological role, plays a role in biomineralization. Seems to regulate the formation of crystallites during the secretory stage of tooth enamel development. Thought to play a major role in the structural organization and mineralization of developing enamel. The protein is Amelogenin, Y isoform (AMELY) of Homo sapiens (Human).